The sequence spans 73 residues: Translation initiation factor IF-1 (73 aa).

The S1-like domain occupies 1 to 73 (MSKKKDVIEM…TRGRITYRYK (73 aa)).

This sequence belongs to the IF-1 family. In terms of assembly, component of the 30S ribosomal translation pre-initiation complex which assembles on the 30S ribosome in the order IF-2 and IF-3, IF-1 and N-formylmethionyl-tRNA(fMet); mRNA recruitment can occur at any time during PIC assembly.

The protein resides in the cytoplasm. In terms of biological role, one of the essential components for the initiation of protein synthesis. Stabilizes the binding of IF-2 and IF-3 on the 30S subunit to which N-formylmethionyl-tRNA(fMet) subsequently binds. Helps modulate mRNA selection, yielding the 30S pre-initiation complex (PIC). Upon addition of the 50S ribosomal subunit IF-1, IF-2 and IF-3 are released leaving the mature 70S translation initiation complex. The chain is Translation initiation factor IF-1 from Roseiflexus castenholzii (strain DSM 13941 / HLO8).